The sequence spans 763 residues: Sphingoid long-chain bases kinase 1 (763 aa).

The interval 34–81 is disordered; it reads TGGSQQSSPIVFPEKRNKKVKASSRRGEVTNDPQVKPKPDEHRIDIGG. Basic and acidic residues predominate over residues 58–81; it reads RRGEVTNDPQVKPKPDEHRIDIGG. The DAGKc domain maps to 245-384; that stretch reads KSAPKMLVIL…TDVFAVEWIH (140 aa). ATP is bound by residues 255–257 and threonine 287; that span reads NPR. 313–316 lines the substrate pocket; the sequence is GGDG. The active-site Proton donor/acceptor is aspartate 315. ATP-binding positions include glutamate 320, 345–347, and arginine 418; that span reads GSD. The segment at 561-603 is disordered; it reads MGLTSVQDPPTRCSWGNTGGQDREDISSTVSDPGPIWDAGPKW. An ATP-binding site is contributed by 733–735; that stretch reads DGE.

Expressed in roots, stems, leaves and at higher levels in flowers.

Involved in the production of sphingolipid metabolites. Active on sphingosine, phytosphingosine (PHS, 4-hydroxysphinganine), D-erythro-dihydrosphingosine, D-erythro-sphingosine and trans-4, trans-8-sphingadienine, an LCB found exclusively in plants, but not on N-acetyl-dihydrosphingosine (C2-dihydroceramide) and D-threo-dihydrosphingosine. This is Sphingoid long-chain bases kinase 1 (LCBK1) from Arabidopsis thaliana (Mouse-ear cress).